The chain runs to 458 residues: MSSGRIVQIIGAVIDVEFPRDLVPNVYDALKVQGAETTLEVQQQLGDGIVRTIAMGSTEGLKRGLDVVNTGTGISVPVGKQTLGRIMDVLGNPIDEAGPIGEEERWTIHRAAPSYSEQAGGNELLETGIKVIDLVCPFAKGGKVGLFGGAGVGKTVNMMELIRNIAMEHSGYSVFAGVGERTREGNDFYHEMKDSNVLDKVALVYGQMNEPPGNRLRVALTGLTMAEKFRDEGRDVLLFVDNIYRYTLAGTEVSALLGRMPSAVGYQPTLAEEMGVLQERITSTKNGSITSVQAVYVPADDLTDPSPATTFAHLDATVVLSRDIASLGIYPAVDPLDSTSRQLDPLVIGQEHYDTARGVQYVLQRYKELKDIIAILGMDELSEQDKQLVSRARKIQRFLSQPFFVAEVFTGSPGKYVPLKETIRGFSGILNGDYDHLPEQAFYMVGSIDEAIEKAKKL.

148–155 (GGAGVGKT) lines the ATP pocket.

The protein belongs to the ATPase alpha/beta chains family. In terms of assembly, F-type ATPases have 2 components, CF(1) - the catalytic core - and CF(0) - the membrane proton channel. CF(1) has five subunits: alpha(3), beta(3), gamma(1), delta(1), epsilon(1). CF(0) has three main subunits: a(1), b(2) and c(9-12). The alpha and beta chains form an alternating ring which encloses part of the gamma chain. CF(1) is attached to CF(0) by a central stalk formed by the gamma and epsilon chains, while a peripheral stalk is formed by the delta and b chains.

The protein localises to the cell inner membrane. The catalysed reaction is ATP + H2O + 4 H(+)(in) = ADP + phosphate + 5 H(+)(out). Its function is as follows. Produces ATP from ADP in the presence of a proton gradient across the membrane. The catalytic sites are hosted primarily by the beta subunits. The chain is ATP synthase subunit beta from Stutzerimonas stutzeri (strain A1501) (Pseudomonas stutzeri).